A 503-amino-acid polypeptide reads, in one-letter code: Sodium/hydrogen exchanger 3 (503 aa).

The Cytoplasmic portion of the chain corresponds to 1-22 (MVIGLSTMLEKTEALFASDHAS). The chain crosses the membrane as a helical span at residues 23-43 (VVSMNLFVALLCACIVLGHLL). Residues 44–51 (EETRWMNE) lie on the Vacuolar side of the membrane. Asn-50 is a glycosylation site (N-linked (GlcNAc...) asparagine). Residues 52-72 (SITALIIGSCTGIVILLISGG) form a helical membrane-spanning segment. Residues 73–76 (KSSR) are Cytoplasmic-facing. Positions 77-97 (ILVFSEDLFFIYLLPPIIFNA) form an intramembrane region, helical. At 98 to 109 (GFQVKKKQFFRN) the chain is on the cytoplasmic side. The chain crosses the membrane as a helical span at residues 110-130 (FMTIMLFGAIGTLISFVIISF). The Vacuolar portion of the chain corresponds to 131–138 (GAKHLFEK). The helical transmembrane segment at 139 to 159 (MNIGDLTIADYLAIGAIFSAT) threads the bilayer. Residues 160–174 (DSVCTLQVLNQDETP) are Cytoplasmic-facing. Residues 175-195 (LLYSLVFGEGVVNDATSVVLF) traverse the membrane as a helical segment. Topologically, residues 196–219 (NAIQRFDLTNINSAIALEFAGNFF) are vacuolar. The helical transmembrane segment at 220–240 (YLFILSTALGVAAGLLSAFVI) threads the bilayer. Residues 241 to 265 (KKLYIGRHSTDREVALMMLLAYLSY) lie on the Cytoplasmic side of the membrane. A helical transmembrane segment spans residues 266-286 (MLAELFHLSSILTVFFCGIVM). Over 287-305 (SHYTWHNVTDKSKVTTKHT) the chain is Vacuolar. N-linked (GlcNAc...) asparagine glycosylation is present at Asn-293. The chain crosses the membrane as a helical span at residues 306–326 (FAAMSFLAEIFIFLYVGMDAL). Residues 327–345 (DIEKWDVVRNSPGQSIGVS) are Cytoplasmic-facing. A helical membrane pass occupies residues 346–366 (SILLGLILLGRAAFVFPLSFL). The Vacuolar portion of the chain corresponds to 367-383 (SNLTKSSPDEKIDLKKQ). A glycan (N-linked (GlcNAc...) asparagine) is linked at Asn-368. The helical transmembrane segment at 384–406 (VTIWWAGLMRGAVSMALAYNQFT) threads the bilayer. Over 407–416 (TSGHTKVLGN) the chain is Cytoplasmic. A helical membrane pass occupies residues 417-437 (AIMITSTITVVLFSTVVFGLL). Residues 438–503 (TKPLVKHLQP…FWKSPSRFTH (66 aa)) are Vacuolar-facing.

Belongs to the monovalent cation:proton antiporter 1 (CPA1) transporter (TC 2.A.36) family. As to expression, expressed in roots.

It localises to the vacuole membrane. The enzyme catalyses Na(+)(in) + H(+)(out) = Na(+)(out) + H(+)(in). It catalyses the reaction K(+)(in) + H(+)(out) = K(+)(out) + H(+)(in). Functionally, may act in low affinity electroneutral exchange of protons for cations such as Na(+) or K(+) across membranes. May also exchange Li(+) and Cs(+) with a lower affinity. This is Sodium/hydrogen exchanger 3 (NHX3) from Arabidopsis thaliana (Mouse-ear cress).